The primary structure comprises 270 residues: Putative pyruvate, phosphate dikinase regulatory protein 1 (270 aa).

151–158 (GVSRTSKT) contacts ADP.

Belongs to the pyruvate, phosphate/water dikinase regulatory protein family. PDRP subfamily.

The enzyme catalyses N(tele)-phospho-L-histidyl/L-threonyl-[pyruvate, phosphate dikinase] + ADP = N(tele)-phospho-L-histidyl/O-phospho-L-threonyl-[pyruvate, phosphate dikinase] + AMP + H(+). It carries out the reaction N(tele)-phospho-L-histidyl/O-phospho-L-threonyl-[pyruvate, phosphate dikinase] + phosphate + H(+) = N(tele)-phospho-L-histidyl/L-threonyl-[pyruvate, phosphate dikinase] + diphosphate. Functionally, bifunctional serine/threonine kinase and phosphorylase involved in the regulation of the pyruvate, phosphate dikinase (PPDK) by catalyzing its phosphorylation/dephosphorylation. In Enterococcus faecalis (strain ATCC 700802 / V583), this protein is Putative pyruvate, phosphate dikinase regulatory protein 1.